Here is a 1257-residue protein sequence, read N- to C-terminus: RAF-like serine/threonine-protein kinase 24 (1257 aa).

The interval 1–21 (MDQAKGYEHVRYTAPDPRDEG) is disordered. The PB1 domain maps to 191 to 277 (PRDQKLRYVG…EKPRMFLFSS (87 aa)). Basic and acidic residues-rich tracts occupy residues 457–480 (VQDPETSSKEAKMRRDDSFQKVND) and 493–502 (KEPKMRRESS). Disordered regions lie at residues 457–629 (VQDP…RTSQ) and 761–789 (SQSEKKNVETNTPEHVSQTETSAKAVPQG). Position 474 is a phosphoserine (serine 474). A compositionally biased stretch (low complexity) spans 533–548 (TQTSSSTPDPSSSTLS). Residues 550-576 (KSLRKSEDHVENNLSAKEPKMRKEHST) are compositionally biased toward basic and acidic residues. Serine 555 carries the phosphoserine modification. Residues 583-593 (SVSSVSSDSMV) are compositionally biased toward low complexity. A compositionally biased stretch (polar residues) spans 769–782 (ETNTPEHVSQTETS). Serine 777 carries the post-translational modification Phosphoserine. The region spanning 974-1239 (LEELKELGSG…PEIARRLRTM (266 aa)) is the Protein kinase domain. ATP is bound by residues 980-988 (LGSGTFGTV) and lysine 1001. Residue serine 1013 is modified to Phosphoserine. The active-site Proton acceptor is aspartate 1102.

It belongs to the protein kinase superfamily. Ser/Thr protein kinase family. In terms of processing, hyperphosphorylated in response to auxin in an ABP1- and TMK1-dependent manner.

It localises to the cytoplasm. The catalysed reaction is L-seryl-[protein] + ATP = O-phospho-L-seryl-[protein] + ADP + H(+). It catalyses the reaction L-threonyl-[protein] + ATP = O-phospho-L-threonyl-[protein] + ADP + H(+). Its activity is regulated as follows. Activated by auxin via rapid phosphorylation downstream of ABP1 and TMK1 signaling. Its function is as follows. RAF-like protein kinase acting, together with RAF20, as a central mediator of a fast response pathway to auxin involving proteins phosphorylation, and leading to rapid cellular responses including membrane depolarization and cytoplasmic streaming. Required for general growth and developmental process. This is RAF-like serine/threonine-protein kinase 24 from Arabidopsis thaliana (Mouse-ear cress).